The following is a 335-amino-acid chain: Protein MET1, chloroplastic (335 aa).

The span at 1–18 (MSLAPSSYPSLYSSPSLP) shows a compositional bias: low complexity. Disordered regions lie at residues 1–29 (MSLA…NPSL) and 66–88 (SETE…KYET). The transit peptide at 1-73 (MSLAPSSYPS…KASETESSAK (73 aa)) directs the protein to the chloroplast. Residues 19 to 29 (RTQQTKQNPSL) show a composition bias toward polar residues. Positions 78–88 (GDGEEEEKYET) are enriched in acidic residues. Residues 97 to 136 (YGLKFRKGRDGGTYIDAILPGGSADKTGKFTVGDRVIATS) enclose the PDZ domain. TPR repeat units follow at residues 217 to 250 (REKD…KPTP), 254 to 287 (SVAS…GYED), and 289 to 323 (KRIR…ESAI).

In terms of assembly, interacts directly with stromal loops of photosystem II (PSII) core components psbB (CP47) and psbC (CP43). Associates with PSII subcomplexes formed during the PSII repair cycle (e.g. PSII dimers, PSII monomers, CP43-less PSII monomerand PSII reaction centers). In terms of processing, phosphorylated rapidly (e.g. within 5 minutes) but transiently at threonine and serine residues after wounding. In terms of tissue distribution, expressed in leaves (at protein level). Mostly expressed in leaves, stems and siliques, and, to a lower extent, in flowers and senescent leaves, but not present in roots (at protein level).

It is found in the plastid. Its subcellular location is the chloroplast membrane. The protein localises to the chloroplast thylakoid membrane. In terms of biological role, involved in photosystem II supercomplex formation and repair, probably acting as a psbB/psbC chaperone on the stromal side of the membrane. This chain is Protein MET1, chloroplastic, found in Arabidopsis thaliana (Mouse-ear cress).